Consider the following 624-residue polypeptide: Kelch-like protein diablo (624 aa).

The segment covering 1–21 (MGDPLLPGSTGLGSGPAAAAT) has biased composition (low complexity). The segment at 1–55 (MGDPLLPGSTGLGSGPAAAATGGSGTTGTGLGSGGTSGAERPPSPARLTHTSEKH) is disordered. Residues 22–37 (GGSGTTGTGLGSGGTS) are compositionally biased toward gly residues. In terms of domain architecture, BTB spans 73–140 (CDVVLNVGGR…CYTAHIIVEE (68 aa)). The BACK domain maps to 175–277 (CLGIRAFADT…SPKFLVGTVG (103 aa)). Kelch repeat units follow at residues 324–370 (VLFA…VLND), 372–418 (LYAV…VLDG), 419–465 (FLYA…VLSG), 467–512 (LYAI…VFNN), 514–559 (IYAV…VVNG), and 560–606 (QLYA…VMRA).

Its pathway is protein modification; protein ubiquitination. In terms of biological role, probable substrate-specific adapter of an E3 ubiquitin-protein ligase complex which mediates the ubiquitination and subsequent proteasomal degradation of target proteins. May have a role in synapse differentiation and growth. This chain is Kelch-like protein diablo, found in Drosophila virilis (Fruit fly).